A 622-amino-acid polypeptide reads, in one-letter code: Mitochondrial Rho GTPase 2 (622 aa).

The Cytoplasmic segment spans residues methionine 1–arginine 596. Positions arginine 2 to histidine 168 constitute a Miro 1 domain. 4 residues coordinate GTP: glycine 16, lysine 17, threonine 18, and serine 19. Threonine 18 is a binding site for Mg(2+). Position 57 (aspartate 57) interacts with Mg(2+). Serine 59 lines the GTP pocket. Lysine 96 participates in a covalent cross-link: Glycyl lysine isopeptide (Lys-Gly) (interchain with G-Cter in ubiquitin). Positions 118, 119, 121, 149, and 150 each coordinate GTP. Lysine 119 participates in a covalent cross-link: Glycyl lysine isopeptide (Lys-Gly) (interchain with G-Cter in ubiquitin). Lysine 164 participates in a covalent cross-link: Glycyl lysine isopeptide (Lys-Gly) (interchain with G-Cter in ubiquitin). 2 EF-hand domains span residues alanine 184–histidine 219 and arginine 304–alanine 339. Positions 197, 199, 201, 208, 317, 319, 321, and 328 each coordinate Ca(2+). In terms of domain architecture, Miro 2 spans arginine 415 to phenylalanine 580. GTP-binding residues include glycine 427, glycine 429, lysine 430, serine 431, and alanine 432. Serine 431 is a Mg(2+) binding site. Residue glutamate 475 coordinates Mg(2+). The GTP site is built by lysine 529, aspartate 531, and cysteine 560. A helical; Anchor for type IV membrane protein transmembrane segment spans residues glycine 597 to valine 619. At lysine 620–arginine 622 the chain is on the mitochondrial intermembrane side.

This sequence belongs to the mitochondrial Rho GTPase family. As to quaternary structure, homodimer. Interacts with the kinesin-binding proteins TRAK1/OIP106 and TRAK2/GRIF1, forming a link between mitochondria and the trafficking apparatus of the microtubules. Interacts with ARMCX3. Found in a complex with KIF5B, OGT, RHOT1 and TRAK1. In terms of processing, ubiquitinated by PRKN in a PINK1-dependent manner, leading to its degradation.

The protein localises to the mitochondrion outer membrane. The catalysed reaction is GTP + H2O = GDP + phosphate + H(+). It carries out the reaction ATP + H2O = ADP + phosphate + H(+). The enzyme catalyses UTP + H2O = UDP + phosphate + H(+). In terms of biological role, atypical mitochondrial nucleoside-triphosphatase (NTPase) involved in mitochondrial trafficking. Probably involved in control of anterograde transport of mitochondria and their subcellular distribution. Can hydrolyze GTP, ATP and UTP. The polypeptide is Mitochondrial Rho GTPase 2 (Rhot2) (Rattus norvegicus (Rat)).